The primary structure comprises 286 residues: Mating type protein A-1 (286 aa).

Positions 40 to 95 form a DNA-binding region, alpha box; that stretch reads AAKKKVNGFMSFRSYYSPLFSQLPQKERSPFMTILWQHDPFHNEWNFMCSVYSSIR.

This sequence belongs to the MATALPHA1 family.

It is found in the nucleus. Functionally, required for expression of the heterokaryon incompatibility and sexual functions. In Neurospora africana, this protein is Mating type protein A-1 (MTA-1).